The primary structure comprises 379 residues: Putative 8-amino-7-oxononanoate synthase (379 aa).

Position 21 (arginine 21) interacts with substrate. A pyridoxal 5'-phosphate-binding site is contributed by 97–98; it reads GY. Histidine 122 contributes to the substrate binding site. Pyridoxal 5'-phosphate contacts are provided by residues serine 169, 194 to 197, and 223 to 226; these read DDAH and TLSK. Lysine 226 carries the post-translational modification N6-(pyridoxal phosphate)lysine. Threonine 340 provides a ligand contact to substrate.

It belongs to the class-II pyridoxal-phosphate-dependent aminotransferase family. BioF subfamily. Homodimer. The cofactor is pyridoxal 5'-phosphate.

The enzyme catalyses 6-carboxyhexanoyl-[ACP] + L-alanine + H(+) = (8S)-8-amino-7-oxononanoate + holo-[ACP] + CO2. It functions in the pathway cofactor biosynthesis; biotin biosynthesis. Its function is as follows. Catalyzes the decarboxylative condensation of pimeloyl-[acyl-carrier protein] and L-alanine to produce 8-amino-7-oxononanoate (AON), [acyl-carrier protein], and carbon dioxide. The polypeptide is Putative 8-amino-7-oxononanoate synthase (bioF) (Bacillus licheniformis (strain ATCC 14580 / DSM 13 / JCM 2505 / CCUG 7422 / NBRC 12200 / NCIMB 9375 / NCTC 10341 / NRRL NRS-1264 / Gibson 46)).